The primary structure comprises 701 residues: Polyribonucleotide nucleotidyltransferase (701 aa).

Mg(2+)-binding residues include aspartate 490 and aspartate 496. Residues 557–616 (PKVETMTIKPEKIRDVIGPGGKKINEIIDETGVKLDIEQDGTIFIGAVDQDMINRAREII) form the KH domain. One can recognise an S1 motif domain in the interval 626 to 694 (GQVYNAKVRR…DKGRVNASHR (69 aa)).

This sequence belongs to the polyribonucleotide nucleotidyltransferase family. It depends on Mg(2+) as a cofactor.

The protein resides in the cytoplasm. The catalysed reaction is RNA(n+1) + phosphate = RNA(n) + a ribonucleoside 5'-diphosphate. In terms of biological role, involved in mRNA degradation. Catalyzes the phosphorolysis of single-stranded polyribonucleotides processively in the 3'- to 5'-direction. The sequence is that of Polyribonucleotide nucleotidyltransferase from Staphylococcus carnosus (strain TM300).